A 207-amino-acid polypeptide reads, in one-letter code: Superoxide dismutase [Mn] (207 aa).

4 residues coordinate Mn(2+): His28, His76, Asp160, and His164.

The protein belongs to the iron/manganese superoxide dismutase family. The cofactor is Mn(2+).

It localises to the secreted. The enzyme catalyses 2 superoxide + 2 H(+) = H2O2 + O2. In terms of biological role, destroys superoxide anion radicals which are normally produced within the cells and which are toxic to biological systems. The polypeptide is Superoxide dismutase [Mn] (sodA) (Mycolicibacterium paratuberculosis (strain ATCC BAA-968 / K-10) (Mycobacterium paratuberculosis)).